Reading from the N-terminus, the 464-residue chain is Serine/threonine-protein kinase 38-like (464 aa).

Position 2 is an N-acetylalanine (Ala2). Residues 64-89 (KLRRSQHARKETEFLRLKRTRLGLDD) form an S100B binding region. Thr75 is subject to Phosphothreonine. Positions 90-383 (FESLKVIGRG…VEEIKGHPFF (294 aa)) constitute a Protein kinase domain. Residues 96-104 (IGRGAFGEV) and Lys119 each bind ATP. The active-site Proton acceptor is Asp213. Ser282 carries the post-translational modification Phosphoserine; by autocatalysis. Residues 384 to 453 (EGVDWGHIRE…KRFEGLTQRG (70 aa)) enclose the AGC-kinase C-terminal domain. Thr442 carries the post-translational modification Phosphothreonine; by STK24/MST3.

Belongs to the protein kinase superfamily. AGC Ser/Thr protein kinase family. As to quaternary structure, homodimeric S100B binds two molecules of STK38L. Interacts with MOB1 and MOB2. Interacts with MICAL1; leading to inhibit the protein kinase activity by antagonizing activation by MST1/STK4. It depends on Mg(2+) as a cofactor. In terms of tissue distribution, highly expressed in the large and small intestine, stomach and testis. High levels also present in the brain, in particular the neurocortex, basal forebrain, hippocampus, the amygdala, cerebellum and brainstem.

The protein resides in the cytoplasm. The protein localises to the cytoskeleton. It localises to the membrane. The enzyme catalyses L-seryl-[protein] + ATP = O-phospho-L-seryl-[protein] + ADP + H(+). It catalyses the reaction L-threonyl-[protein] + ATP = O-phospho-L-threonyl-[protein] + ADP + H(+). Activated by binding of S100B which releases autoinhibitory N-lobe interactions, enabling ATP to bind and the autophosphorylation of Ser-282. Thr-442 then undergoes calcium-dependent phosphorylation by STK24/MST3. Interactions between phosphorylated Thr-442 and the N-lobe promote additional structural changes that complete the activation of the kinase. Autoinhibition is also released by the binding of MOB1/MOBKL1A and MOB2 to the N-terminal of STK38L. Its function is as follows. Involved in the regulation of structural processes in differentiating and mature neuronal cells. In Mus musculus (Mouse), this protein is Serine/threonine-protein kinase 38-like.